Reading from the N-terminus, the 139-residue chain is Putative pre-16S rRNA nuclease (139 aa).

This sequence belongs to the YqgF nuclease family.

The protein localises to the cytoplasm. Could be a nuclease involved in processing of the 5'-end of pre-16S rRNA. This Phocaeicola vulgatus (strain ATCC 8482 / DSM 1447 / JCM 5826 / CCUG 4940 / NBRC 14291 / NCTC 11154) (Bacteroides vulgatus) protein is Putative pre-16S rRNA nuclease.